Reading from the N-terminus, the 243-residue chain is VQ motif-containing protein 33 (243 aa).

Residues 1-16 are compositionally biased toward polar residues; the sequence is MEVSTSSMSSKPEQMQ. Residues 1-49 form a disordered region; sequence MEVSTSSMSSKPEQMQNPPPMISSPRFQPQIISPHHHDQHQHLSNPYPT. Residues 59–68 carry the VQ motif; the sequence is FKQVVQMLTG. Disordered stretches follow at residues 69–98 and 138–162; these read SSTDTTTGKHHEAPSPVNNNNKGSSFSIPP and FTGGNSSHHQSPRFSPRNSSSSENI. Phosphoserine is present on residues Ser83 and Ser95. Residues 84 to 98 are compositionally biased toward polar residues; that stretch reads PVNNNNKGSSFSIPP. A Phosphothreonine modification is found at Thr139. Phosphoserine is present on residues Ser148, Ser152, Ser165, Ser167, and Ser178. Residues 149-162 are compositionally biased toward low complexity; it reads PRFSPRNSSSSENI. The tract at residues 180 to 243 is disordered; sequence VTPLRSNDDP…FPVASPARNS (64 aa). Position 181 is a phosphothreonine (Thr181). Over residues 191–201 the composition is skewed to polar residues; that stretch reads NKSSPLSLGNS. 2 positions are modified to phosphoserine: Ser218 and Ser221. Phosphothreonine is present on Thr222. Ser238 bears the Phosphoserine mark.

Phosphorylated on serine and threonine residues by MPK6.

Its subcellular location is the nucleus. In terms of biological role, may modulate WRKY transcription factor activities. This is VQ motif-containing protein 33 from Arabidopsis thaliana (Mouse-ear cress).